The chain runs to 382 residues: D-galactonate dehydratase 1 (382 aa).

Asp183 is a binding site for Mg(2+). His185 acts as the Proton donor in catalysis. Mg(2+) is bound by residues Glu209 and Glu235. The Proton acceptor role is filled by His285.

This sequence belongs to the mandelate racemase/muconate lactonizing enzyme family. GalD subfamily. Mg(2+) serves as cofactor.

It carries out the reaction D-galactonate = 2-dehydro-3-deoxy-D-galactonate + H2O. The protein operates within carbohydrate acid metabolism; D-galactonate degradation; D-glyceraldehyde 3-phosphate and pyruvate from D-galactonate: step 1/3. Functionally, catalyzes the dehydration of D-galactonate to 2-keto-3-deoxy-D-galactonate. In Escherichia coli (strain SMS-3-5 / SECEC), this protein is D-galactonate dehydratase 1.